The chain runs to 55 residues: Large ribosomal subunit protein bL33 (55 aa).

The protein belongs to the bacterial ribosomal protein bL33 family.

This is Large ribosomal subunit protein bL33 from Mycobacterium leprae (strain Br4923).